The following is a 161-amino-acid chain: Endoribonuclease YbeY (161 aa).

His127, His131, and His137 together coordinate Zn(2+).

This sequence belongs to the endoribonuclease YbeY family. Zn(2+) serves as cofactor.

It localises to the cytoplasm. In terms of biological role, single strand-specific metallo-endoribonuclease involved in late-stage 70S ribosome quality control and in maturation of the 3' terminus of the 16S rRNA. The protein is Endoribonuclease YbeY of Listeria monocytogenes serotype 4a (strain HCC23).